A 444-amino-acid polypeptide reads, in one-letter code: Argininosuccinate synthase (444 aa).

Residues 18 to 26 (AFSGGLDTS) and Ala44 each bind ATP. Residue Tyr100 coordinates L-citrulline. The ATP site is built by Gly130 and Thr132. L-aspartate contacts are provided by Thr132, Asn136, and Asp137. An L-citrulline-binding site is contributed by Asn136. An ATP-binding site is contributed by Asp137. 2 residues coordinate L-citrulline: Arg140 and Ser193. Asp195 provides a ligand contact to ATP. L-citrulline-binding residues include Thr202, Glu204, and Glu281.

It belongs to the argininosuccinate synthase family. Type 2 subfamily. As to quaternary structure, homotetramer.

It localises to the cytoplasm. The enzyme catalyses L-citrulline + L-aspartate + ATP = 2-(N(omega)-L-arginino)succinate + AMP + diphosphate + H(+). It participates in amino-acid biosynthesis; L-arginine biosynthesis; L-arginine from L-ornithine and carbamoyl phosphate: step 2/3. The polypeptide is Argininosuccinate synthase (Histophilus somni (strain 2336) (Haemophilus somnus)).